The primary structure comprises 58 residues: Large ribosomal subunit protein bL32 (58 aa).

This sequence belongs to the bacterial ribosomal protein bL32 family.

This is Large ribosomal subunit protein bL32 from Carboxydothermus hydrogenoformans (strain ATCC BAA-161 / DSM 6008 / Z-2901).